The chain runs to 258 residues: Leucine-rich repeat-containing protein 3B (258 aa).

A signal peptide spans 1–33 (MTPLDLWLSRSIPMCLLLQSLVLMVLCFPSAST). The 35-residue stretch at 34 to 68 (CPKGCTCQRSESPPHGLNVTCSLSRLKEIPPDVPP) folds into the LRRNT domain. N-linked (GlcNAc...) asparagine glycosylation occurs at Asn51. 3 LRR repeats span residues 69-90 (DTQL…IFHG), 93-114 (MLRR…AFIG), and 118-139 (SLEV…AFAR). Asn98 carries an N-linked (GlcNAc...) asparagine glycan. Residues 149–196 (NPWHCDCALQQALGGMAHNHERVLCRSSELRDQEGQPFMAVDADLCNL) enclose the LRRCT domain. Residues 204–224 (AMLVTMFGWFAMVISYVVYYV) traverse the membrane as a helical segment.

It belongs to the LRRC3 family.

The protein localises to the membrane. The polypeptide is Leucine-rich repeat-containing protein 3B (lrrc3b) (Danio rerio (Zebrafish)).